The following is a 579-amino-acid chain: Zinc metalloproteinase nas-11 (579 aa).

The N-terminal stretch at 1 to 17 is a signal peptide; sequence MTPSLVFLIVVIVVVEG. A propeptide spanning residues 18-328 is cleaved from the precursor; sequence QGWRPWDRFN…AAPGSSRLKK (311 aa). The tract at residues 35–58 is disordered; the sequence is WGGNNWGTRQRNQEPHDIPPPVPP. Asn-256 is a glycosylation site (N-linked (GlcNAc...) asparagine). The segment covering 293–312 has biased composition (acidic residues); the sequence is GDDEIPLPDADTDDEDDDDS. Residues 293–323 are disordered; it reads GDDEIPLPDADTDDEDDDDSTNSASGAAPGS. The Peptidase M12A domain maps to 329–536; the sequence is SALYFEGNLI…IELLKKMYCQ (208 aa). Intrachain disulfides connect Cys-375/Cys-535, Cys-401/Cys-421, Cys-539/Cys-575, Cys-546/Cys-568, and Cys-555/Cys-572. Residue His-430 coordinates Zn(2+). Glu-431 is a catalytic residue. Zn(2+)-binding residues include His-434 and His-440. The N-linked (GlcNAc...) asparagine glycan is linked to Asn-454. Positions 539–575 constitute a ShKT domain; it reads CDDKNVYCGAWALKDLCKNPGHDQYMAANCKKSCGLC.

Zn(2+) is required as a cofactor. In terms of tissue distribution, expressed in the anterior part of the intestine, CEP neurons and to a lesser extent in hypodermis.

Its subcellular location is the secreted. In terms of biological role, metalloprotease. This is Zinc metalloproteinase nas-11 (nas-11) from Caenorhabditis elegans.